We begin with the raw amino-acid sequence, 307 residues long: Yop proteins translocation protein Q (307 aa).

The protein belongs to the FliN/MopA/SpaO family.

Its function is as follows. Component of the Yop secretion machinery. The polypeptide is Yop proteins translocation protein Q (yscQ) (Yersinia pestis).